A 55-amino-acid chain; its full sequence is Large ribosomal subunit protein bL33 (55 aa).

The protein belongs to the bacterial ribosomal protein bL33 family.

This Bordetella pertussis (strain Tohama I / ATCC BAA-589 / NCTC 13251) protein is Large ribosomal subunit protein bL33.